We begin with the raw amino-acid sequence, 376 residues long: Erythronate-4-phosphate dehydrogenase (376 aa).

Residues serine 45 and threonine 66 each coordinate substrate. Residues aspartate 146 and threonine 175 each contribute to the NAD(+) site. Arginine 209 is an active-site residue. Aspartate 233 lines the NAD(+) pocket. Glutamate 238 is an active-site residue. Histidine 255 (proton donor) is an active-site residue. Glycine 258 is a binding site for NAD(+). Tyrosine 259 provides a ligand contact to substrate.

Belongs to the D-isomer specific 2-hydroxyacid dehydrogenase family. PdxB subfamily. As to quaternary structure, homodimer.

Its subcellular location is the cytoplasm. It catalyses the reaction 4-phospho-D-erythronate + NAD(+) = (R)-3-hydroxy-2-oxo-4-phosphooxybutanoate + NADH + H(+). The protein operates within cofactor biosynthesis; pyridoxine 5'-phosphate biosynthesis; pyridoxine 5'-phosphate from D-erythrose 4-phosphate: step 2/5. Functionally, catalyzes the oxidation of erythronate-4-phosphate to 3-hydroxy-2-oxo-4-phosphonooxybutanoate. The polypeptide is Erythronate-4-phosphate dehydrogenase (Baumannia cicadellinicola subsp. Homalodisca coagulata).